Consider the following 20-residue polypeptide: ALGDQLLSVFVDHTLVDEVA.

The 20-residue stretch at 1–20 folds into the GMPS ATP-PPase domain; sequence ALGDQLLSVFVDHTLVDEVA.

Homodimer.

The catalysed reaction is XMP + L-glutamine + ATP + H2O = GMP + L-glutamate + AMP + diphosphate + 2 H(+). It functions in the pathway purine metabolism; GMP biosynthesis; GMP from XMP (L-Gln route): step 1/1. In terms of biological role, catalyzes the synthesis of GMP from XMP. The protein is GMP synthase [glutamine-hydrolyzing] (guaA) of Fructilactobacillus sanfranciscensis (Lactobacillus sanfranciscensis).